Consider the following 1028-residue polypeptide: Receptor-type guanylate cyclase gcy-13 (1028 aa).

6 N-linked (GlcNAc...) asparagine glycosylation sites follow: N58, N156, N324, N337, N377, and N394. Residues 438-458 (IVVIVAVIIVLCCAAAAIAAF) traverse the membrane as a helical segment. Over 459–1028 (LVIKARRDEE…WLLGMKEESA (570 aa)) the chain is Cytoplasmic. Residues 491–511 (ESHHSSRSLQSNSTTTTGTTG) are disordered. The span at 497 to 511 (RSLQSNSTTTTGTTG) shows a compositional bias: low complexity. The Protein kinase domain occupies 499 to 770 (LQSNSTTTTG…DMVNKLMKNM (272 aa)). Residues 786 to 817 (SVLEKHASSLEDEVQERMKELVEEKKKSDILL) are a coiled coil. The Guanylate cyclase domain maps to 844–974 (TIFFSDVVGF…DTVNTASRME (131 aa)).

Belongs to the adenylyl cyclase class-4/guanylyl cyclase family. Expressed bilaterally in RIM interneurons.

The protein resides in the cell membrane. It catalyses the reaction GTP = 3',5'-cyclic GMP + diphosphate. In terms of biological role, guanylate cyclase involved in the production of the second messenger cGMP. This chain is Receptor-type guanylate cyclase gcy-13, found in Caenorhabditis elegans.